A 76-amino-acid chain; its full sequence is DNA gyrase inhibitor YacG (76 aa).

Positions 7, 10, 26, and 30 each coordinate Zn(2+).

It belongs to the DNA gyrase inhibitor YacG family. Interacts with GyrB. Zn(2+) serves as cofactor.

Inhibits all the catalytic activities of DNA gyrase by preventing its interaction with DNA. Acts by binding directly to the C-terminal domain of GyrB, which probably disrupts DNA binding by the gyrase. This chain is DNA gyrase inhibitor YacG, found in Pseudoalteromonas translucida (strain TAC 125).